A 192-amino-acid chain; its full sequence is Fe/S biogenesis protein NfuA (192 aa).

2 residues coordinate [4Fe-4S] cluster: C149 and C152.

It belongs to the NfuA family. Homodimer. The cofactor is [4Fe-4S] cluster.

In terms of biological role, involved in iron-sulfur cluster biogenesis. Binds a 4Fe-4S cluster, can transfer this cluster to apoproteins, and thereby intervenes in the maturation of Fe/S proteins. Could also act as a scaffold/chaperone for damaged Fe/S proteins. This is Fe/S biogenesis protein NfuA from Shewanella denitrificans (strain OS217 / ATCC BAA-1090 / DSM 15013).